We begin with the raw amino-acid sequence, 389 residues long: 1-deoxy-D-xylulose 5-phosphate reductoisomerase (389 aa).

S11, G12, S13, V14, N39, and N122 together coordinate NADPH. K123 contacts 1-deoxy-D-xylulose 5-phosphate. Residue E124 participates in NADPH binding. D148 contributes to the Mn(2+) binding site. S149, E150, S174, and H197 together coordinate 1-deoxy-D-xylulose 5-phosphate. E150 serves as a coordination point for Mn(2+). An NADPH-binding site is contributed by G203. 1-deoxy-D-xylulose 5-phosphate contacts are provided by S210, N215, K216, and E219. Mn(2+) is bound at residue E219.

This sequence belongs to the DXR family. Mg(2+) is required as a cofactor. Mn(2+) serves as cofactor.

The catalysed reaction is 2-C-methyl-D-erythritol 4-phosphate + NADP(+) = 1-deoxy-D-xylulose 5-phosphate + NADPH + H(+). It participates in isoprenoid biosynthesis; isopentenyl diphosphate biosynthesis via DXP pathway; isopentenyl diphosphate from 1-deoxy-D-xylulose 5-phosphate: step 1/6. Its function is as follows. Catalyzes the NADPH-dependent rearrangement and reduction of 1-deoxy-D-xylulose-5-phosphate (DXP) to 2-C-methyl-D-erythritol 4-phosphate (MEP). This Leptospira interrogans serogroup Icterohaemorrhagiae serovar copenhageni (strain Fiocruz L1-130) protein is 1-deoxy-D-xylulose 5-phosphate reductoisomerase.